Reading from the N-terminus, the 447-residue chain is Na(+)-translocating NADH-quinone reductase subunit A (447 aa).

This sequence belongs to the NqrA family. In terms of assembly, composed of six subunits; NqrA, NqrB, NqrC, NqrD, NqrE and NqrF.

The enzyme catalyses a ubiquinone + n Na(+)(in) + NADH + H(+) = a ubiquinol + n Na(+)(out) + NAD(+). Its function is as follows. NQR complex catalyzes the reduction of ubiquinone-1 to ubiquinol by two successive reactions, coupled with the transport of Na(+) ions from the cytoplasm to the periplasm. NqrA to NqrE are probably involved in the second step, the conversion of ubisemiquinone to ubiquinol. This chain is Na(+)-translocating NADH-quinone reductase subunit A, found in Saccharophagus degradans (strain 2-40 / ATCC 43961 / DSM 17024).